Here is a 171-residue protein sequence, read N- to C-terminus: Co-chaperone protein HscB homolog (171 aa).

Residues Asn-2–Glu-74 enclose the J domain.

The protein belongs to the HscB family. As to quaternary structure, interacts with HscA and stimulates its ATPase activity.

Co-chaperone involved in the maturation of iron-sulfur cluster-containing proteins. Seems to help targeting proteins to be folded toward HscA. The polypeptide is Co-chaperone protein HscB homolog (Aliivibrio salmonicida (strain LFI1238) (Vibrio salmonicida (strain LFI1238))).